Consider the following 112-residue polypeptide: uncharacterized protein (112 aa).

2 helical membrane passes run 44 to 63 and 68 to 90; these read VITG…LHSL and LAAL…KLVH.

It localises to the cell membrane. This is an uncharacterized protein from Archaeoglobus fulgidus (strain ATCC 49558 / DSM 4304 / JCM 9628 / NBRC 100126 / VC-16).